Reading from the N-terminus, the 311-residue chain is Methionyl-tRNA formyltransferase (311 aa).

Residue 110–113 (SLLP) participates in (6S)-5,6,7,8-tetrahydrofolate binding.

Belongs to the Fmt family.

The catalysed reaction is L-methionyl-tRNA(fMet) + (6R)-10-formyltetrahydrofolate = N-formyl-L-methionyl-tRNA(fMet) + (6S)-5,6,7,8-tetrahydrofolate + H(+). In terms of biological role, attaches a formyl group to the free amino group of methionyl-tRNA(fMet). The formyl group appears to play a dual role in the initiator identity of N-formylmethionyl-tRNA by promoting its recognition by IF2 and preventing the misappropriation of this tRNA by the elongation apparatus. In Streptococcus pyogenes serotype M1, this protein is Methionyl-tRNA formyltransferase.